Consider the following 375-residue polypeptide: Membrane progesterone receptor epsilon (375 aa).

Positions 1–39 are disordered; sequence MPRRLQQRGAGVKGPPASTSRRSHPASASAPRSPPAATT. Over 1 to 84 the chain is Cytoplasmic; that stretch reads MPRRLQQRGA…VLKPTNETLN (84 aa). The segment covering 15–39 has biased composition (low complexity); the sequence is PPASTSRRSHPASASAPRSPPAATT. The helical transmembrane segment at 85-105 threads the bilayer; sequence FWTHFIPLLLFLSKFCRLFFL. The Extracellular segment spans residues 106 to 114; it reads GGSDVPFHH. The helical transmembrane segment at 115 to 135 threads the bilayer; it reads PWLLPLWCYASGVLLTFAMSC. At 136–160 the chain is on the cytoplasmic side; the sequence is TAHVFSCLSLRLRAAFFYLDYASIS. The chain crosses the membrane as a helical span at residues 161–181; that stretch reads YYGFGSTVAYYYYLLPSLSLL. Residues 182–203 lie on the Extracellular side of the membrane; that stretch reads DARVMTPYVQQRLGWHVDCTRL. The chain crosses the membrane as a helical span at residues 204 to 224; it reads IAVYRALVLPVAFVLAVACTV. The Cytoplasmic portion of the chain corresponds to 225-241; that stretch reads ACCKSRTDWCSYPFALR. The helical transmembrane segment at 242 to 262 threads the bilayer; that stretch reads TFVFVMPLSMACPIMLESWLF. The Extracellular portion of the chain corresponds to 263 to 299; sequence DLRGENPTLFVHFYRRYFWLVVAAFFNVSKIPERIQP. The helical transmembrane segment at 300–320 threads the bilayer; that stretch reads GLFDIIGHSHQLFHIFTFLSI. The Cytoplasmic segment spans residues 321–341; it reads YDQVYYVEEGLRQFLQAPPAA. A helical transmembrane segment spans residues 342-362; the sequence is PTFSGTVGYMLLLVVCLGLVI. At 363 to 375 the chain is on the extracellular side; it reads RKFLNSTEFCSKK.

This sequence belongs to the ADIPOR family. As to quaternary structure, homodimer.

It localises to the cell membrane. Plasma membrane progesterone (P4) receptor coupled to G proteins. Seems to act through a G(s) mediated pathway. May be involved in regulating rapid P4 signaling in the nervous system. Also binds dehydroepiandrosterone (DHEA), pregnanolone, pregnenolone and allopregnanolone. This is Membrane progesterone receptor epsilon from Mus musculus (Mouse).